The following is a 272-amino-acid chain: Insertion element IS600 uncharacterized 31 kDa protein (272 aa).

An Integrase catalytic domain is found at alanine 105–histidine 268.

The protein is Insertion element IS600 uncharacterized 31 kDa protein of Shigella sonnei.